A 477-amino-acid polypeptide reads, in one-letter code: Aspartyl/glutamyl-tRNA(Asn/Gln) amidotransferase subunit B (477 aa).

Belongs to the GatB/GatE family. GatB subfamily. In terms of assembly, heterotrimer of A, B and C subunits.

It catalyses the reaction L-glutamyl-tRNA(Gln) + L-glutamine + ATP + H2O = L-glutaminyl-tRNA(Gln) + L-glutamate + ADP + phosphate + H(+). It carries out the reaction L-aspartyl-tRNA(Asn) + L-glutamine + ATP + H2O = L-asparaginyl-tRNA(Asn) + L-glutamate + ADP + phosphate + 2 H(+). Its function is as follows. Allows the formation of correctly charged Asn-tRNA(Asn) or Gln-tRNA(Gln) through the transamidation of misacylated Asp-tRNA(Asn) or Glu-tRNA(Gln) in organisms which lack either or both of asparaginyl-tRNA or glutaminyl-tRNA synthetases. The reaction takes place in the presence of glutamine and ATP through an activated phospho-Asp-tRNA(Asn) or phospho-Glu-tRNA(Gln). The protein is Aspartyl/glutamyl-tRNA(Asn/Gln) amidotransferase subunit B of Legionella pneumophila (strain Paris).